A 40-amino-acid polypeptide reads, in one-letter code: Dolichyl-diphosphooligosaccharide--protein glycosyltransferase subunit 4 (40 aa).

Topologically, residues 1-4 (MITD) are lumenal. Residues 5–25 (VQLAIFSNVLGVFLFLLVVAY) form a helical membrane-spanning segment. The Cytoplasmic portion of the chain corresponds to 26 to 40 (HYINANTGKIGPKAK).

The protein belongs to the OST4 family. Component of the oligosaccharyltransferase (OST) complex.

The protein resides in the endoplasmic reticulum membrane. In terms of biological role, subunit of the oligosaccharyl transferase (OST) complex that catalyzes the initial transfer of a defined glycan (Glc(3)Man(9)GlcNAc(2) in eukaryotes) from the lipid carrier dolichol-pyrophosphate to an asparagine residue within an Asn-X-Ser/Thr consensus motif in nascent polypeptide chains, the first step in protein N-glycosylation. N-glycosylation occurs cotranslationally and the complex associates with the Sec61 complex at the channel-forming translocon complex that mediates protein translocation across the endoplasmic reticulum (ER). All subunits are required for a maximal enzyme activity. The sequence is that of Dolichyl-diphosphooligosaccharide--protein glycosyltransferase subunit 4 from Drosophila willistoni (Fruit fly).